The sequence spans 153 residues: Probable inactive ribonuclease-like protein 13 (153 aa).

Positions 1 to 22 are cleaved as a signal peptide; that stretch reads MASDAASLLVLQLVLQPTLVTG.

Belongs to the pancreatic ribonuclease family.

It is found in the secreted. Its function is as follows. Does not exhibit any ribonuclease activity. The polypeptide is Probable inactive ribonuclease-like protein 13 (Rnase13) (Rattus norvegicus (Rat)).